The sequence spans 484 residues: Glycogen synthase (484 aa).

ADP-alpha-D-glucose is bound at residue Lys-21.

It belongs to the glycosyltransferase 1 family. Bacterial/plant glycogen synthase subfamily.

The catalysed reaction is [(1-&gt;4)-alpha-D-glucosyl](n) + ADP-alpha-D-glucose = [(1-&gt;4)-alpha-D-glucosyl](n+1) + ADP + H(+). It functions in the pathway glycan biosynthesis; glycogen biosynthesis. Synthesizes alpha-1,4-glucan chains using ADP-glucose. This Pseudomonas syringae pv. tomato (strain ATCC BAA-871 / DC3000) protein is Glycogen synthase.